A 276-amino-acid chain; its full sequence is Large ribosomal subunit protein uL2 (276 aa).

The interval 224-276 (VMNPVDHPHGGGEGKAPIGRKSPMTPWGKPTLGYKTRKKKNKSDKFIIRRRKK) is disordered. A compositionally biased stretch (basic residues) spans 258 to 276 (KTRKKKNKSDKFIIRRRKK).

It belongs to the universal ribosomal protein uL2 family. In terms of assembly, part of the 50S ribosomal subunit. Forms a bridge to the 30S subunit in the 70S ribosome.

One of the primary rRNA binding proteins. Required for association of the 30S and 50S subunits to form the 70S ribosome, for tRNA binding and peptide bond formation. It has been suggested to have peptidyltransferase activity; this is somewhat controversial. Makes several contacts with the 16S rRNA in the 70S ribosome. The sequence is that of Large ribosomal subunit protein uL2 from Geobacillus thermodenitrificans (strain NG80-2).